Here is a 173-residue protein sequence, read N- to C-terminus: Translation initiation factor IF-3 (173 aa).

This sequence belongs to the IF-3 family. As to quaternary structure, monomer.

The protein localises to the cytoplasm. IF-3 binds to the 30S ribosomal subunit and shifts the equilibrium between 70S ribosomes and their 50S and 30S subunits in favor of the free subunits, thus enhancing the availability of 30S subunits on which protein synthesis initiation begins. The polypeptide is Translation initiation factor IF-3 (Lactiplantibacillus plantarum (strain ATCC BAA-793 / NCIMB 8826 / WCFS1) (Lactobacillus plantarum)).